The sequence spans 574 residues: Ankyrin repeat protein B18 (574 aa).

ANK repeat units lie at residues 56 to 87, 135 to 164, 167 to 213, 217 to 249, 253 to 285, and 327 to 356; these read TGYTALHCYLYNNYFTNDVLKILLNHGVDVTM, IKSRYMLLKEEDIDENIVSTLLDKGIDPNF, DGYT…NLNA, CGNTPFHLYLSIEMCNNIHMTKMLLTFNPNFKI, HGLTPILCYITSDYIQHDILVMLIHHYETNVGE, and EGKTLLHVACEYNNTHVIDYLIRINGDINA. Residues 541–574 enclose the F-box domain; it reads NCLLTLLPSEIIYEILYMLTINDLYNISYPPTKV.

The chain is Ankyrin repeat protein B18 from Vaccinia virus (strain Ankara) (VACV).